An 80-amino-acid chain; its full sequence is Adipogenin (80 aa).

The helical transmembrane segment at 16 to 36 (FLVFWLCLPVALLLFLTIVWL) threads the bilayer. Ser-63 bears the Phosphoserine mark.

It belongs to the adipogenin family. In terms of tissue distribution, selectively expressed in adipose tissue where it is particularly enriched in brown adipose tissue. In adipose tissue, expressed exclusively in adipocytes and not in the stromal-vascular cell population. Expressed at much lower levels in heart, stomach and muscle and barely detected in kidney and lung.

The protein resides in the membrane. The protein localises to the nucleus. In terms of biological role, plays a role in stimulating adipocyte differentiation and development. The sequence is that of Adipogenin (Adig) from Mus musculus (Mouse).